Reading from the N-terminus, the 473-residue chain is UDP-glycosyltransferase 91D2 (473 aa).

Histidine 26 serves as the catalytic Proton acceptor. Histidine 26 contributes to the an anthocyanidin binding site. The active-site Charge relay is aspartate 121. The UDP-alpha-D-glucose site is built by alanine 344, glutamine 346, histidine 361, serine 366, and glutamate 369. Glycine 384 lines the an anthocyanidin pocket. Positions 385 and 386 each coordinate UDP-alpha-D-glucose.

The protein belongs to the UDP-glycosyltransferase family.

The enzyme catalyses steviolmonoside + UDP-alpha-D-glucose = steviolbioside + UDP + H(+). It catalyses the reaction rubusoside + UDP-alpha-D-glucose = stevioside + UDP + H(+). The catalysed reaction is stevioside + UDP-alpha-D-glucose = rebaudioside E + UDP + H(+). It carries out the reaction rebaudioside A + UDP-alpha-D-glucose = rebaudioside D + UDP + H(+). Its function is as follows. Involved in the biosynthesis of steviol glycosides in leaves. Converts the mono-glycoside steviolmonoside to the bi-glycoside steviolbioside. Converts the bi-glycoside rubusoside to the tri-glycoside stevioside. Converts the tri-glycoside stevioside to the tetra-glycoside rebaudioside E. Converts the tetra-glycoside rebaudioside A to the penta-glycoside rebaudioside E. The sequence is that of UDP-glycosyltransferase 91D2 from Stevia rebaudiana (Stevia).